A 254-amino-acid polypeptide reads, in one-letter code: Diphthine synthase (254 aa).

Residues L11, D86, I89, 114 to 115, L166, L207, and H232 contribute to the S-adenosyl-L-methionine site; that span reads SV.

This sequence belongs to the diphthine synthase family. In terms of assembly, homodimer.

The enzyme catalyses 2-[(3S)-amino-3-carboxypropyl]-L-histidyl-[translation elongation factor 2] + 3 S-adenosyl-L-methionine = diphthine-[translation elongation factor 2] + 3 S-adenosyl-L-homocysteine + 3 H(+). It functions in the pathway protein modification; peptidyl-diphthamide biosynthesis. S-adenosyl-L-methionine-dependent methyltransferase that catalyzes the trimethylation of the amino group of the modified target histidine residue in translation elongation factor 2 (EF-2), to form an intermediate called diphthine. The three successive methylation reactions represent the second step of diphthamide biosynthesis. This chain is Diphthine synthase, found in Sulfurisphaera tokodaii (strain DSM 16993 / JCM 10545 / NBRC 100140 / 7) (Sulfolobus tokodaii).